Reading from the N-terminus, the 892-residue chain is Isoleucine--tRNA ligase (892 aa).

The 'HIGH' region signature appears at 60–70; sequence PYANGSIHIGH. Glutamate 552 contacts L-isoleucyl-5'-AMP. Positions 593 to 597 match the 'KMSKS' region motif; the sequence is KMSKS. Lysine 596 contacts ATP. Zn(2+)-binding residues include cysteine 862, cysteine 865, cysteine 879, and cysteine 882.

Belongs to the class-I aminoacyl-tRNA synthetase family. IleS type 1 subfamily. As to quaternary structure, monomer. Zn(2+) is required as a cofactor.

The protein localises to the cytoplasm. It carries out the reaction tRNA(Ile) + L-isoleucine + ATP = L-isoleucyl-tRNA(Ile) + AMP + diphosphate. In terms of biological role, catalyzes the attachment of isoleucine to tRNA(Ile). As IleRS can inadvertently accommodate and process structurally similar amino acids such as valine, to avoid such errors it has two additional distinct tRNA(Ile)-dependent editing activities. One activity is designated as 'pretransfer' editing and involves the hydrolysis of activated Val-AMP. The other activity is designated 'posttransfer' editing and involves deacylation of mischarged Val-tRNA(Ile). The protein is Isoleucine--tRNA ligase of Mycoplasmopsis agalactiae (strain NCTC 10123 / CIP 59.7 / PG2) (Mycoplasma agalactiae).